A 689-amino-acid polypeptide reads, in one-letter code: Glycine--tRNA ligase beta subunit (689 aa).

This sequence belongs to the class-II aminoacyl-tRNA synthetase family. In terms of assembly, tetramer of two alpha and two beta subunits.

It is found in the cytoplasm. The enzyme catalyses tRNA(Gly) + glycine + ATP = glycyl-tRNA(Gly) + AMP + diphosphate. The chain is Glycine--tRNA ligase beta subunit from Shewanella baltica (strain OS185).